Here is a 1226-residue protein sequence, read N- to C-terminus: E3 ubiquitin-protein ligase mind-bomb (1226 aa).

Over residues 1-12 (MSCAATLSSAKD) the composition is skewed to polar residues. Disordered stretches follow at residues 1 to 42 (MSCA…NTNT) and 66 to 87 (GGGG…AGGV). Residues 19-30 (SGGGGGGGGGGA) show a composition bias toward gly residues. 2 stretches are compositionally biased toward low complexity: residues 31-42 (PTNSNTNTNTNT) and 73-86 (GGTT…AAGG). Residues 100–168 (VRRFSMEGVG…AYDLRILDSA (69 aa)) enclose the MIB/HERC2 1 domain. The ZZ-type zinc finger occupies 174–226 (HEGTMCDTCRQQPIFGIRWKCAECINYDLCSICYHGDKHHLRHRFYRITTPGG). Zn(2+) is bound by residues C179, C182, C194, C197, C203, C206, H212, and H216. The MIB/HERC2 2 domain maps to 237–315 (SKKVLARGIF…MADLKVVNDA (79 aa)). 8 ANK repeats span residues 567 to 596 (AGHT…DVEI), 600 to 629 (DGDR…DLNA), 633 to 662 (RRQT…HPSL), 666 to 695 (EGDT…DITL), 699 to 731 (NGFN…IVEE), 735 to 765 (DGYT…NMDR), 769 to 798 (NLQT…DLNI), and 802 to 833 (DGDT…KLLM). The interval 890-919 (TDDSELPGNVAGTSSSARARAASGSLNQSS) is disordered. A compositionally biased stretch (low complexity) spans 900 to 914 (AGTSSSARARAASGS). 2 consecutive RING-type zinc fingers follow at residues 970 to 1005 (CLVC…LICR) and 1017 to 1052 (CLVC…VLCR). A coiled-coil region spans residues 1159 to 1181 (VNNFQMDDVQKLKQQLQDIKEQT). The segment at 1183–1216 (CPVCFDRIKNMVFLCGHGTCQMCGDQIEGCPICR) adopts an RING-type 3 zinc-finger fold.

Interacts with intracellular domain of Dl and Ser. As to expression, ubiquitous in the wing imaginal disk (at protein level).

Its subcellular location is the cytoplasm. The protein resides in the cell cortex. It carries out the reaction S-ubiquitinyl-[E2 ubiquitin-conjugating enzyme]-L-cysteine + [acceptor protein]-L-lysine = [E2 ubiquitin-conjugating enzyme]-L-cysteine + N(6)-ubiquitinyl-[acceptor protein]-L-lysine.. The protein operates within protein modification; protein ubiquitination. Functionally, E3 ubiquitin-protein ligase that mediates ubiquitination of Delta (Dl) and Serrate (Ser) receptors, which act as ligands of Notch proteins. Positively regulates the Notch signaling by ubiquitinating the intracellular domain of Dl and Ser, leading to endocytosis of Dl and Ser receptors. Regulates a subset of Notch signaling events, including wing margin specification, leg segmentation and vein determination, that are distinct from those events requiring neuralize (neur) activity. Also modulates lateral inhibition, a neur- and Dl-dependent signaling event, suggesting a distinct but partially complementary function with neur. This chain is E3 ubiquitin-protein ligase mind-bomb (mib1), found in Drosophila melanogaster (Fruit fly).